The following is a 373-amino-acid chain: UDP-N-acetylglucosamine--N-acetylmuramyl-(pentapeptide) pyrophosphoryl-undecaprenol N-acetylglucosamine transferase (373 aa).

Residues 13–15, Asn124, Arg165, Ser192, and Gln293 each bind UDP-N-acetyl-alpha-D-glucosamine; that span reads TGG.

Belongs to the glycosyltransferase 28 family. MurG subfamily.

The protein resides in the cell inner membrane. It catalyses the reaction di-trans,octa-cis-undecaprenyl diphospho-N-acetyl-alpha-D-muramoyl-L-alanyl-D-glutamyl-meso-2,6-diaminopimeloyl-D-alanyl-D-alanine + UDP-N-acetyl-alpha-D-glucosamine = di-trans,octa-cis-undecaprenyl diphospho-[N-acetyl-alpha-D-glucosaminyl-(1-&gt;4)]-N-acetyl-alpha-D-muramoyl-L-alanyl-D-glutamyl-meso-2,6-diaminopimeloyl-D-alanyl-D-alanine + UDP + H(+). Its pathway is cell wall biogenesis; peptidoglycan biosynthesis. In terms of biological role, cell wall formation. Catalyzes the transfer of a GlcNAc subunit on undecaprenyl-pyrophosphoryl-MurNAc-pentapeptide (lipid intermediate I) to form undecaprenyl-pyrophosphoryl-MurNAc-(pentapeptide)GlcNAc (lipid intermediate II). This is UDP-N-acetylglucosamine--N-acetylmuramyl-(pentapeptide) pyrophosphoryl-undecaprenol N-acetylglucosamine transferase from Sinorhizobium fredii (strain NBRC 101917 / NGR234).